Here is a 334-residue protein sequence, read N- to C-terminus: MLGIMAWNATCKNWLAAEAALEKYYLSIFYGIEFVVGVLGNTIVVYGYIFSLKNWNSSNIYLFNLSVSDLAFLCTLPMLIRSYANGNWIYGDVLCISNRYVLHANLYTSILFLTFISIDRYLIIKYPFREHLLQKKEFAILISLAIWVLVTLELLPILPLINPVITDNGTTCNDFASSGDPNYNLIYSMCLTLLGFLIPLFVMCFFYYKIALFLKQRNRQVATALPLEKPLNLVIMAVVIFSVLFTPYHVMRNVRIASRLGSWKQYQCTQVVINSFYIVTRPLAFLNSVINPVFYFLLGDHFRDMLMNQLRHNFKSLTSFSRWAHELLLSFREK.

At 5–31 (MAWNATCKNWLAAEAALEKYYLSIFYG) the chain is on the extracellular side. N-linked (GlcNAc...) asparagine glycosylation is present at Asn8. The helical transmembrane segment at 32–52 (IEFVVGVLGNTIVVYGYIFSL) threads the bilayer. Over 53–59 (KNWNSSN) the chain is Cytoplasmic. A helical membrane pass occupies residues 60–80 (IYLFNLSVSDLAFLCTLPMLI). The Extracellular segment spans residues 81 to 103 (RSYANGNWIYGDVLCISNRYVLH). A disulfide bond links Cys95 and Cys172. Residues 104 to 124 (ANLYTSILFLTFISIDRYLII) traverse the membrane as a helical segment. Residues 125–137 (KYPFREHLLQKKE) lie on the Cytoplasmic side of the membrane. Residues 138–158 (FAILISLAIWVLVTLELLPIL) traverse the membrane as a helical segment. Residues 159–185 (PLINPVITDNGTTCNDFASSGDPNYNL) lie on the Extracellular side of the membrane. A glycan (N-linked (GlcNAc...) asparagine) is linked at Asn168. The helical transmembrane segment at 186–206 (IYSMCLTLLGFLIPLFVMCFF) threads the bilayer. The Cytoplasmic segment spans residues 207–230 (YYKIALFLKQRNRQVATALPLEKP). A helical membrane pass occupies residues 231-251 (LNLVIMAVVIFSVLFTPYHVM). At 252–281 (RNVRIASRLGSWKQYQCTQVVINSFYIVTR) the chain is on the extracellular side. The chain crosses the membrane as a helical span at residues 282-302 (PLAFLNSVINPVFYFLLGDHF). The Cytoplasmic portion of the chain corresponds to 303-334 (RDMLMNQLRHNFKSLTSFSRWAHELLLSFREK).

Belongs to the G-protein coupled receptor 1 family. In terms of tissue distribution, expressed specifically in kidney. Highly expressed in immature dendritic cells, expression rapidly downregulates after maturation. Also expressed in macrophages.

The protein resides in the cell membrane. G protein-coupled receptor for succinate able to mediate signaling through Gq/GNAQ or Gi/GNAI second messengers depending on the cell type and the processes regulated. Succinate-SUCNR1 signaling serves as a link between metabolic stress, inflammation and energy homeostasis. In macrophages, plays a range of immune-regulatory roles. During inflammation, succinate-SUCNR1 signaling may act as an anti-inflammatory mediator or boost inflammation depending on the inflammatory status of cells. Hyperpolarizes M2 macrophages versus M1 phenotype through Gq signaling by regulating the transcription of genes involved in immune function. In activated M1 macrophages, plays a pro-inflammatory role in response to LPS. Expressed in dendritic cells, where it is involved in the sensing of immunological danger and enhances immunity. Mediates succinate triggered intracelleular calcium mobilization, induces migratory responses and acts in synergy with Toll-like receptor ligands for the production of proinflammatory cytokines as well as an enhancement of antigen-specific activation of helper T cells. In the small intestine, mediates the activation of tuft cells by dietary succinate and triggers type 2 immunity. In adipocytes, plays an important role in the control of energy metabolism. In response to succinate, controls leptin expression in an AMPK-JNK-CEBPA-dependent as well as circadian clock-regulated manner. In muscle tissue, is expressed in non-muscle cells and coordinates muscle remodeling in response to the succinate produced during exercise training in a paracrine manner. In retina, acts as a mediator of vessel growth during retinal development. In response to succinate, regulates the production of angiogenic factors, including VEGF, by retinal ganglion neurons. The protein is Succinate receptor 1 of Homo sapiens (Human).